A 457-amino-acid polypeptide reads, in one-letter code: Argininosuccinate lyase (457 aa).

It belongs to the lyase 1 family. Argininosuccinate lyase subfamily.

The protein resides in the cytoplasm. The catalysed reaction is 2-(N(omega)-L-arginino)succinate = fumarate + L-arginine. Its pathway is amino-acid biosynthesis; L-arginine biosynthesis; L-arginine from L-ornithine and carbamoyl phosphate: step 3/3. The polypeptide is Argininosuccinate lyase (Psychrobacter cryohalolentis (strain ATCC BAA-1226 / DSM 17306 / VKM B-2378 / K5)).